The sequence spans 187 residues: MIHLNILYWPPAGGFGLNTNILEINIINLAVVLGVLIYLGKGVCAGCILNDLLENRKQTILSTIHDAEERYEEATEKLNQARTRLQQAKVKADEIRVNGLTQMEREKQDLINAADEDSRRLEDSKNSTIRFEEQRAIEQVRQQVSRLALERALESLNTRLNNELHSRMIDYHIGLLRAMESTTDQFL.

Residues 29-49 (LAVVLGVLIYLGKGVCAGCIL) traverse the membrane as a helical segment.

This sequence belongs to the ATPase B chain family. As to quaternary structure, F-type ATPases have 2 components, F(1) - the catalytic core - and F(0) - the membrane proton channel. F(1) has five subunits: alpha(3), beta(3), gamma(1), delta(1), epsilon(1). F(0) has four main subunits: a(1), b(1), b'(1) and c(10-14). The alpha and beta chains form an alternating ring which encloses part of the gamma chain. F(1) is attached to F(0) by a central stalk formed by the gamma and epsilon chains, while a peripheral stalk is formed by the delta, b and b' chains.

It localises to the plastid. Its subcellular location is the chloroplast thylakoid membrane. Its function is as follows. F(1)F(0) ATP synthase produces ATP from ADP in the presence of a proton or sodium gradient. F-type ATPases consist of two structural domains, F(1) containing the extramembraneous catalytic core and F(0) containing the membrane proton channel, linked together by a central stalk and a peripheral stalk. During catalysis, ATP synthesis in the catalytic domain of F(1) is coupled via a rotary mechanism of the central stalk subunits to proton translocation. In terms of biological role, component of the F(0) channel, it forms part of the peripheral stalk, linking F(1) to F(0). This Angiopteris evecta (Mule's foot fern) protein is ATP synthase subunit b, chloroplastic.